Consider the following 492-residue polypeptide: Ketol-acid reductoisomerase (NADP(+)) (492 aa).

Positions 15–208 (AQLGKCRFMA…GGDRAGVLES (194 aa)) constitute a KARI N-terminal Rossmann domain. Residues 45–48 (CGAQ), Arg68, Arg76, Ser78, and 108–110 (DKQ) contribute to the NADP(+) site. The active site involves His132. Gly158 lines the NADP(+) pocket. KARI C-terminal knotted domains are found at residues 209-344 (SFVA…KAPP) and 345-485 (FEGK…MTDM). Mg(2+) is bound by residues Asp217, Glu221, Glu389, and Glu393. Residue Ser414 participates in substrate binding.

Belongs to the ketol-acid reductoisomerase family. The cofactor is Mg(2+).

It catalyses the reaction (2R)-2,3-dihydroxy-3-methylbutanoate + NADP(+) = (2S)-2-acetolactate + NADPH + H(+). The catalysed reaction is (2R,3R)-2,3-dihydroxy-3-methylpentanoate + NADP(+) = (S)-2-ethyl-2-hydroxy-3-oxobutanoate + NADPH + H(+). The protein operates within amino-acid biosynthesis; L-isoleucine biosynthesis; L-isoleucine from 2-oxobutanoate: step 2/4. It functions in the pathway amino-acid biosynthesis; L-valine biosynthesis; L-valine from pyruvate: step 2/4. Its function is as follows. Involved in the biosynthesis of branched-chain amino acids (BCAA). Catalyzes an alkyl-migration followed by a ketol-acid reduction of (S)-2-acetolactate (S2AL) to yield (R)-2,3-dihydroxy-isovalerate. In the isomerase reaction, S2AL is rearranged via a Mg-dependent methyl migration to produce 3-hydroxy-3-methyl-2-ketobutyrate (HMKB). In the reductase reaction, this 2-ketoacid undergoes a metal-dependent reduction by NADPH to yield (R)-2,3-dihydroxy-isovalerate. The polypeptide is Ketol-acid reductoisomerase (NADP(+)) (Edwardsiella ictaluri (strain 93-146)).